The sequence spans 524 residues: Ribonuclease Y (524 aa).

A helical membrane pass occupies residues 2 to 22; sequence GIVINLFLIIAASIVFFVVGF. The region spanning 214 to 299 is the KH domain; sequence ALSVVHIQSD…KAYQDAKKEI (86 aa). Residues 340–432 form the HD domain; the sequence is LLQHSREVAM…VDAANIVSLS (93 aa).

It belongs to the RNase Y family.

Its subcellular location is the cell membrane. In terms of biological role, endoribonuclease that initiates mRNA decay. This is Ribonuclease Y from Chlorobaculum tepidum (strain ATCC 49652 / DSM 12025 / NBRC 103806 / TLS) (Chlorobium tepidum).